Consider the following 238-residue polypeptide: NAD(P)H-hydrate epimerase (238 aa).

In terms of domain architecture, YjeF N-terminal spans 10–225 (AIKVDQILFN…ALQRQYELNL (216 aa)). 68-72 (NNGGD) contacts (6S)-NADPHX. Residues asparagine 69 and aspartate 133 each coordinate K(+). (6S)-NADPHX contacts are provided by residues 137-143 (GFSFKPP) and aspartate 166. K(+) is bound at residue serine 169.

The protein belongs to the NnrE/AIBP family. K(+) serves as cofactor.

It catalyses the reaction (6R)-NADHX = (6S)-NADHX. It carries out the reaction (6R)-NADPHX = (6S)-NADPHX. Its function is as follows. Catalyzes the epimerization of the S- and R-forms of NAD(P)HX, a damaged form of NAD(P)H that is a result of enzymatic or heat-dependent hydration. This is a prerequisite for the S-specific NAD(P)H-hydrate dehydratase to allow the repair of both epimers of NAD(P)HX. This chain is NAD(P)H-hydrate epimerase, found in Drosophila willistoni (Fruit fly).